Consider the following 440-residue polypeptide: Thymidine phosphorylase (440 aa).

The protein belongs to the thymidine/pyrimidine-nucleoside phosphorylase family. In terms of assembly, homodimer.

It catalyses the reaction thymidine + phosphate = 2-deoxy-alpha-D-ribose 1-phosphate + thymine. The protein operates within pyrimidine metabolism; dTMP biosynthesis via salvage pathway; dTMP from thymine: step 1/2. The enzymes which catalyze the reversible phosphorolysis of pyrimidine nucleosides are involved in the degradation of these compounds and in their utilization as carbon and energy sources, or in the rescue of pyrimidine bases for nucleotide synthesis. In Salmonella dublin (strain CT_02021853), this protein is Thymidine phosphorylase.